The sequence spans 252 residues: 2-succinyl-6-hydroxy-2,4-cyclohexadiene-1-carboxylate synthase (252 aa).

Belongs to the AB hydrolase superfamily. MenH family. Monomer.

The enzyme catalyses 5-enolpyruvoyl-6-hydroxy-2-succinyl-cyclohex-3-ene-1-carboxylate = (1R,6R)-6-hydroxy-2-succinyl-cyclohexa-2,4-diene-1-carboxylate + pyruvate. It participates in quinol/quinone metabolism; 1,4-dihydroxy-2-naphthoate biosynthesis; 1,4-dihydroxy-2-naphthoate from chorismate: step 3/7. The protein operates within quinol/quinone metabolism; menaquinone biosynthesis. In terms of biological role, catalyzes a proton abstraction reaction that results in 2,5-elimination of pyruvate from 2-succinyl-5-enolpyruvyl-6-hydroxy-3-cyclohexene-1-carboxylate (SEPHCHC) and the formation of 2-succinyl-6-hydroxy-2,4-cyclohexadiene-1-carboxylate (SHCHC). The polypeptide is 2-succinyl-6-hydroxy-2,4-cyclohexadiene-1-carboxylate synthase (Escherichia coli (strain UTI89 / UPEC)).